Consider the following 310-residue polypeptide: tRNA pseudouridine synthase B (310 aa).

The active-site Nucleophile is the D38.

Belongs to the pseudouridine synthase TruB family. Type 1 subfamily.

It carries out the reaction uridine(55) in tRNA = pseudouridine(55) in tRNA. In terms of biological role, responsible for synthesis of pseudouridine from uracil-55 in the psi GC loop of transfer RNAs. The polypeptide is tRNA pseudouridine synthase B (Geotalea uraniireducens (strain Rf4) (Geobacter uraniireducens)).